The chain runs to 860 residues: DNA mismatch repair protein MutS (860 aa).

625-632 (GPNMGGKS) contributes to the ATP binding site.

It belongs to the DNA mismatch repair MutS family.

Its function is as follows. This protein is involved in the repair of mismatches in DNA. It is possible that it carries out the mismatch recognition step. This protein has a weak ATPase activity. This is DNA mismatch repair protein MutS from Aeromonas hydrophila subsp. hydrophila (strain ATCC 7966 / DSM 30187 / BCRC 13018 / CCUG 14551 / JCM 1027 / KCTC 2358 / NCIMB 9240 / NCTC 8049).